The following is a 227-amino-acid chain: Protein rapunzel (227 aa).

Residues 179 to 196 (LAYLFCIGFIALMGYYGI) traverse the membrane as a helical segment.

Its subcellular location is the membrane. This chain is Protein rapunzel, found in Danio rerio (Zebrafish).